The sequence spans 105 residues: UPF0145 protein GK1405 (105 aa).

The protein belongs to the UPF0145 family.

The chain is UPF0145 protein GK1405 from Geobacillus kaustophilus (strain HTA426).